A 118-amino-acid polypeptide reads, in one-letter code: Small ribosomal subunit protein uS13 (118 aa).

The tract at residues 92 to 118 (RRGHPLRGQRTRTNARTRKGPRKAIRK) is disordered.

Belongs to the universal ribosomal protein uS13 family. In terms of assembly, part of the 30S ribosomal subunit. Forms a loose heterodimer with protein S19. Forms two bridges to the 50S subunit in the 70S ribosome.

Functionally, located at the top of the head of the 30S subunit, it contacts several helices of the 16S rRNA. In the 70S ribosome it contacts the 23S rRNA (bridge B1a) and protein L5 of the 50S subunit (bridge B1b), connecting the 2 subunits; these bridges are implicated in subunit movement. Contacts the tRNAs in the A and P-sites. The polypeptide is Small ribosomal subunit protein uS13 (Xanthomonas campestris pv. campestris (strain ATCC 33913 / DSM 3586 / NCPPB 528 / LMG 568 / P 25)).